Here is a 221-residue protein sequence, read N- to C-terminus: 2-phospho-L-lactate guanylyltransferase (221 aa).

It belongs to the CofC family. In terms of assembly, homodimer.

The enzyme catalyses (2S)-2-phospholactate + GTP + H(+) = (2S)-lactyl-2-diphospho-5'-guanosine + diphosphate. Its pathway is cofactor biosynthesis; coenzyme F420 biosynthesis. In terms of biological role, guanylyltransferase that catalyzes the activation of (2S)-2-phospholactate (2-PL) as (2S)-lactyl-2-diphospho-5'-guanosine, via the condensation of 2-PL with GTP. It is involved in the biosynthesis of coenzyme F420, a hydride carrier cofactor. The sequence is that of 2-phospho-L-lactate guanylyltransferase from Methanothrix thermoacetophila (strain DSM 6194 / JCM 14653 / NBRC 101360 / PT) (Methanosaeta thermophila).